Here is a 414-residue protein sequence, read N- to C-terminus: MHFFSAIVLTCLASTAVAYPALEQAASSAEFKEYQKQEKRQTLGFDAASQIVSTTGDHAWQAPGANDIRGPCPGLNSMANHGYIPRNGYTSDAQIIAAMQAVFNISPDFGGFLTVLGSAMGGDGLGFSIGGPPSASLLTATGLVGKPQGMSNTHNRFESDQSITRDDLYQTGNDVTLNMNFFQDLLNSSLPKGWYDIDVLGNHAVKRFQYSVANNPYFFKGLNTAFIPEATSALVTYLFANHSAACPAGCLDATNLKSFYSVTGSGSTLKYTPGHERIPDNWYKYPVGYGVANVFADMVTVYSKYSNQAAFGGNTGTVNSFTGLDVANITGGVYNAETLLQGNNLGCFLFNGMEFFMPDLISNGGVIGDVSGVVSSLTGTITSLLAPFNCPKLSGIDKKAFAIYPGWNDGKPRK.

A signal peptide spans 1 to 18 (MHFFSAIVLTCLASTAVA). Position 72 (Cys72) interacts with heme. Asn187, Asn241, and Asn328 each carry an N-linked (GlcNAc...) asparagine glycan.

This sequence belongs to the chloroperoxidase family. It depends on heme b as a cofactor.

The protein operates within mycotoxin biosynthesis. Its function is as follows. Peroxidase; part of the fragmented gene cluster that mediates the biosynthesis of dothistromin (DOTH), a polyketide toxin very similar in structure to the aflatoxin precursor, versicolorin B. The first step of the pathway is the conversion of acetate to norsolorinic acid (NOR) and requires the fatty acid synthase subunits hexA and hexB, as well as the polyketide synthase pksA. PksA combines a hexanoyl starter unit and 7 malonyl-CoA extender units to synthesize the precursor NOR. The hexanoyl starter unit is provided to the acyl-carrier protein (ACP) domain by the fungal fatty acid synthase hexA/hexB. The second step is the conversion of NOR to averantin (AVN) and requires the norsolorinic acid ketoreductase nor1, which catalyzes the dehydration of norsolorinic acid to form (1'S)-averantin. The cytochrome P450 monooxygenase avnA then catalyzes the hydroxylation of AVN to 5'hydroxyaverantin (HAVN). The next step is performed by adhA that transforms HAVN to averufin (AVF). Averufin might then be converted to hydroxyversicolorone by cypX and avfA. Hydroxyversicolorone is further converted versiconal hemiacetal acetate (VHA) by moxY. VHA is then the substrate for the versiconal hemiacetal acetate esterase est1 to yield versiconal (VAL). Versicolorin B synthase vbsA then converts VAL to versicolorin B (VERB) by closing the bisfuran ring. Then, the activity of the versicolorin B desaturase verB leads to versicolorin A (VERA). DotB, a predicted chloroperoxidase, may perform epoxidation of the A-ring of VERA. Alternatively, a cytochrome P450, such as cypX or avnA could catalyze this step. It is also possible that another, uncharacterized, cytochrome P450 enzyme is responsible for this step. Opening of the epoxide could potentially be achieved by the epoxide hydrolase epoA. However, epoA seems not to be required for DOTH biosynthesis, but other epoxide hydrolases may have the ability to complement this hydrolysis. Alternatively, opening of the epoxide ring could be achieved non-enzymatically. The next step is the deoxygenation of ring A to yield the 5,8-dihydroxyanthraquinone which is most likely catalyzed by the NADPH dehydrogenase encoded by ver1. The last stages of DOTH biosynthesis are proposed to involve hydroxylation of the bisfuran. OrdB and norB might have oxidative roles here. An alternative possibility is that cytochrome P450 monoogenases such as avnA and cypX might perform these steps in addition to previously proposed steps. This chain is Dothistromin biosynthesis peroxidase dotB, found in Dothistroma septosporum (Red band needle blight fungus).